Consider the following 192-residue polypeptide: uncharacterized protein (192 aa).

Belongs to the CAPAB/TerDEXZ family.

This is an uncharacterized protein from Bacillus subtilis (strain 168).